Here is a 376-residue protein sequence, read N- to C-terminus: CC-adding tRNA nucleotidyltransferase (376 aa).

26-29 (GAVR) provides a ligand contact to CTP. Mg(2+) is bound by residues D39 and D41. Residues 94-95 (RD), N99, 136-145 (DPLRMLRAAR), and R176 each bind CTP.

The protein belongs to the tRNA nucleotidyltransferase/poly(A) polymerase family. The cofactor is Mg(2+).

The catalysed reaction is a tRNA precursor + 2 CTP = a tRNA with a 3' CC end + 2 diphosphate. Functionally, tRNA nucleotidyltransferase involved in the synthesis of the tRNA CCA terminus. Adds the two cytidine residues to tRNA. The chain is CC-adding tRNA nucleotidyltransferase from Shouchella clausii (strain KSM-K16) (Alkalihalobacillus clausii).